We begin with the raw amino-acid sequence, 658 residues long: D-ornithine--citrate ligase (658 aa).

Belongs to the IucA/IucC family.

It catalyses the reaction D-ornithine + citrate + ATP = N(5)-[(S)-citryl]-D-ornithine + AMP + diphosphate + H(+). Its pathway is siderophore biosynthesis. In terms of biological role, involved in the biosynthesis of the siderophore staphyloferrin A. Catalyzes the ATP-dependent condensation of D-ornithine and citrate to form a citryl-D-ornithine intermediate. The sequence is that of D-ornithine--citrate ligase from Staphylococcus aureus (strain NCTC 8325 / PS 47).